The following is a 503-amino-acid chain: Aromatase 1 (503 aa).

Position 437 (cysteine 437) interacts with heme.

The protein belongs to the cytochrome P450 family. Heme serves as cofactor.

It is found in the membrane. It catalyses the reaction testosterone + 3 reduced [NADPH--hemoprotein reductase] + 3 O2 = 17beta-estradiol + formate + 3 oxidized [NADPH--hemoprotein reductase] + 4 H2O + 4 H(+). The catalysed reaction is androst-4-ene-3,17-dione + 3 reduced [NADPH--hemoprotein reductase] + 3 O2 = estrone + formate + 3 oxidized [NADPH--hemoprotein reductase] + 4 H2O + 4 H(+). Its function is as follows. Catalyzes the formation of aromatic C18 estrogens from C19 androgens. This chain is Aromatase 1 (CYP19A1), found in Sus scrofa (Pig).